We begin with the raw amino-acid sequence, 78 residues long: UPF0154 protein SSU98_1719 (78 aa).

The chain crosses the membrane as a helical span at residues leucine 3 to tyrosine 23.

Belongs to the UPF0154 family.

The protein localises to the cell membrane. This is UPF0154 protein SSU98_1719 from Streptococcus suis (strain 98HAH33).